The primary structure comprises 283 residues: Pantothenate synthetase (283 aa).

An ATP-binding site is contributed by 30 to 37 (MGNLHLGH). His-37 (proton donor) is an active-site residue. Gln-61 contributes to the (R)-pantoate binding site. Gln-61 contributes to the beta-alanine binding site. 149–152 (GQKD) serves as a coordination point for ATP. Gln-155 is a (R)-pantoate binding site. ATP contacts are provided by residues Ile-178 and 186–189 (MSSR).

The protein belongs to the pantothenate synthetase family. Homodimer.

The protein resides in the cytoplasm. It catalyses the reaction (R)-pantoate + beta-alanine + ATP = (R)-pantothenate + AMP + diphosphate + H(+). Its pathway is cofactor biosynthesis; (R)-pantothenate biosynthesis; (R)-pantothenate from (R)-pantoate and beta-alanine: step 1/1. Its function is as follows. Catalyzes the condensation of pantoate with beta-alanine in an ATP-dependent reaction via a pantoyl-adenylate intermediate. This is Pantothenate synthetase from Shewanella halifaxensis (strain HAW-EB4).